A 428-amino-acid polypeptide reads, in one-letter code: Serine hydroxymethyltransferase (428 aa).

120–122 (GHI) is a binding site for (6S)-5,6,7,8-tetrahydrofolate. Lysine 226 carries the post-translational modification N6-(pyridoxal phosphate)lysine.

Belongs to the SHMT family. In terms of assembly, homodimer. Requires pyridoxal 5'-phosphate as cofactor.

The protein resides in the cytoplasm. The catalysed reaction is 5,10-methylenetetrahydromethanopterin + glycine + H2O = 5,6,7,8-tetrahydromethanopterin + L-serine. Its pathway is amino-acid biosynthesis; glycine biosynthesis; glycine from L-serine: step 1/1. Functionally, catalyzes the reversible interconversion of serine and glycine with tetrahydromethanopterin (H4MPT) serving as the one-carbon carrier. Also exhibits a pteridine-independent aldolase activity toward beta-hydroxyamino acids, producing glycine and aldehydes, via a retro-aldol mechanism. This chain is Serine hydroxymethyltransferase, found in Methanopyrus kandleri (strain AV19 / DSM 6324 / JCM 9639 / NBRC 100938).